An 885-amino-acid polypeptide reads, in one-letter code: Initiator protein NS1 (885 aa).

The interval 404 to 477 (AEAGPSGTQP…GREDIFSGAP (74 aa)) is disordered. Residues 409-423 (SGTQPVETAQQSPPT) show a composition bias toward polar residues. The span at 452–465 (QAAGGSEMGAGGSA) shows a compositional bias: gly residues.

Belongs to the parvoviruses initiator protein NS1 family. Homooligomer. Mg(2+) serves as cofactor.

It is found in the host nucleus. It catalyses the reaction ATP + H2O = ADP + phosphate + H(+). In terms of biological role, multifunctional protein which displays endonuclease and helicase activities required for initiating and directing viral DNA replication. Also plays a role in viral packaging and transactivation of several promoters. Binds site-specifically to 2-3 approximate tandem copies within the origins of replication (Ori), unwinds this hairpin region and nicks one DNA strand thereby initiating the rolling circle replication (RCR). In Bombyx mori densovirus (BmDNV), this protein is Initiator protein NS1.